The following is a 118-amino-acid chain: UPF0295 protein BC_0520 (118 aa).

A run of 2 helical transmembrane segments spans residues 12–32 (IRTF…LGVF) and 43–63 (FMMV…WIGM).

This sequence belongs to the UPF0295 family.

It is found in the cell membrane. The protein is UPF0295 protein BC_0520 of Bacillus cereus (strain ATCC 14579 / DSM 31 / CCUG 7414 / JCM 2152 / NBRC 15305 / NCIMB 9373 / NCTC 2599 / NRRL B-3711).